The primary structure comprises 78 residues: Large ribosomal subunit protein bL28B (78 aa).

This sequence belongs to the bacterial ribosomal protein bL28 family.

This Streptomyces coelicolor (strain ATCC BAA-471 / A3(2) / M145) protein is Large ribosomal subunit protein bL28B (rpmB2).